We begin with the raw amino-acid sequence, 412 residues long: D-nopaline dehydrogenase (412 aa).

Belongs to the lysopine/nopaline/octopine/opine/vitopine dehydrogenases family. Homotetramer.

The enzyme catalyses D-nopaline + NADP(+) + H2O = L-arginine + 2-oxoglutarate + NADPH + H(+). This Agrobacterium vitis (Rhizobium vitis) protein is D-nopaline dehydrogenase (nos).